The primary structure comprises 884 residues: DNA mismatch repair protein MutS (884 aa).

Position 651 to 658 (651 to 658) interacts with ATP; that stretch reads GPNMSGKS. The tract at residues 843–884 is disordered; that stretch reads LRNQGKSQPAQKNCKKEPAPNRSPDPAVGDQLSLIPAPLFPD.

The protein belongs to the DNA mismatch repair MutS family.

This protein is involved in the repair of mismatches in DNA. It is possible that it carries out the mismatch recognition step. This protein has a weak ATPase activity. This is DNA mismatch repair protein MutS from Synechococcus sp. (strain JA-2-3B'a(2-13)) (Cyanobacteria bacterium Yellowstone B-Prime).